The sequence spans 189 residues: 3-isopropylmalate dehydratase small subunit (189 aa).

The protein belongs to the LeuD family. LeuD type 1 subfamily. In terms of assembly, heterodimer of LeuC and LeuD.

It catalyses the reaction (2R,3S)-3-isopropylmalate = (2S)-2-isopropylmalate. It functions in the pathway amino-acid biosynthesis; L-leucine biosynthesis; L-leucine from 3-methyl-2-oxobutanoate: step 2/4. Functionally, catalyzes the isomerization between 2-isopropylmalate and 3-isopropylmalate, via the formation of 2-isopropylmaleate. The protein is 3-isopropylmalate dehydratase small subunit of Francisella philomiragia subsp. philomiragia (strain ATCC 25017 / CCUG 19701 / FSC 153 / O#319-036).